Reading from the N-terminus, the 219-residue chain is MSLLVKICGLTTPETLDAALDAGAEMVGFVFFPPSPRHVGLTAARELGQQAKGRALKVALTVDADDATFENIVETLRPDLLQLHGRESIARIRDLKQRFGLPVMKAVAVATSADLAPLAGYADVCDRILFDARAPKDATRPGGLGATFDWHVLEALKLDRPFMVSGGLSADNVAEAVRITRAGGVDVSSGVERTPGVKDCDMIRNFIRAARAAEELSVQ.

The protein belongs to the TrpF family.

It catalyses the reaction N-(5-phospho-beta-D-ribosyl)anthranilate = 1-(2-carboxyphenylamino)-1-deoxy-D-ribulose 5-phosphate. It participates in amino-acid biosynthesis; L-tryptophan biosynthesis; L-tryptophan from chorismate: step 3/5. This Bradyrhizobium sp. (strain ORS 278) protein is N-(5'-phosphoribosyl)anthranilate isomerase.